A 356-amino-acid chain; its full sequence is Histidinol-phosphate aminotransferase 2 (356 aa).

At K217 the chain carries N6-(pyridoxal phosphate)lysine.

This sequence belongs to the class-II pyridoxal-phosphate-dependent aminotransferase family. Histidinol-phosphate aminotransferase subfamily. As to quaternary structure, homodimer. Pyridoxal 5'-phosphate serves as cofactor.

It catalyses the reaction L-histidinol phosphate + 2-oxoglutarate = 3-(imidazol-4-yl)-2-oxopropyl phosphate + L-glutamate. It functions in the pathway amino-acid biosynthesis; L-histidine biosynthesis; L-histidine from 5-phospho-alpha-D-ribose 1-diphosphate: step 7/9. The protein is Histidinol-phosphate aminotransferase 2 of Burkholderia pseudomallei (strain 1710b).